Reading from the N-terminus, the 303-residue chain is Haloalkane dehalogenase (303 aa).

The AB hydrolase-1 domain maps to 48 to 192 (PVLLLHGEPS…GTVTKLSQAV (145 aa)). Asp-123 functions as the Nucleophile in the catalytic mechanism. Asp-250 (proton donor) is an active-site residue. Catalysis depends on His-280, which acts as the Proton acceptor.

This sequence belongs to the haloalkane dehalogenase family. Type 1 subfamily. In terms of assembly, monomer.

The enzyme catalyses 1-haloalkane + H2O = a halide anion + a primary alcohol + H(+). Its function is as follows. Catalyzes hydrolytic cleavage of carbon-halogen bonds in halogenated aliphatic compounds, leading to the formation of the corresponding primary alcohols, halide ions and protons. In Psychrobacter cryohalolentis (strain ATCC BAA-1226 / DSM 17306 / VKM B-2378 / K5), this protein is Haloalkane dehalogenase.